The chain runs to 233 residues: Translation initiation factor 6 (233 aa).

This sequence belongs to the eIF-6 family.

In terms of biological role, binds to the 50S ribosomal subunit and prevents its association with the 30S ribosomal subunit to form the 70S initiation complex. The sequence is that of Translation initiation factor 6 from Aeropyrum pernix (strain ATCC 700893 / DSM 11879 / JCM 9820 / NBRC 100138 / K1).